We begin with the raw amino-acid sequence, 452 residues long: Multifunctional glycoside hydrolase (452 aa).

Substrate contacts are provided by Q17, H118, and N162. The Proton donor role is filled by E163. Y303 provides a ligand contact to substrate. Catalysis depends on E361, which acts as the Nucleophile. Substrate-binding positions include W407 and 414–415; that span reads EW.

The protein belongs to the glycosyl hydrolase 1 family. As to quaternary structure, monomer. Homotrimer.

The enzyme catalyses Hydrolysis of terminal, non-reducing beta-D-glucosyl residues with release of beta-D-glucose.. It catalyses the reaction Hydrolysis of terminal non-reducing beta-D-galactose residues in beta-D-galactosides.. It carries out the reaction Hydrolysis of (1-&gt;4)-beta-D-xylans, to remove successive D-xylose residues from the non-reducing termini.. The catalysed reaction is Hydrolysis of (1-&gt;4)-linkages in (1-&gt;4)-beta-D-glucans, to remove successive glucose units.. The enzyme catalyses Hydrolysis of (1-&gt;4)-beta-D-glucosidic linkages in cellulose and cellotetraose, releasing cellobiose from the non-reducing ends of the chains.. It participates in glycan metabolism; beta-D-glucan degradation. It functions in the pathway glycan metabolism; cellulose degradation. Its activity is regulated as follows. Slight activation by Mn(2+), Ni(2+) and K(+). Slight inhibition by Fe(3+), Zn(2+), Co(2+), Mg(2+), Cu(2+), Na(+) and NH4(+). Its function is as follows. Has high beta-D-glucosidase, exoglucanase, beta-D-xylosidase, beta-D-galactosidase, and transgalactosylation activities in vitro. Has a very broad substrate specificity with the highest activity with p-nitrophenyl beta-D-galactopyranoside (pNPGal) as substrate. Active with pNP-beta-D-glucopyranoside (pNPGlu), pNP-beta-D-cellobioside (pNPC), lactose, pNP-beta-D-xylopyranoside (pNPX) and cellobiose in the order of decreasing activity, respectively. Very low activity with soluble polysaccharides synanthrin and locust bean gum. Very low, but detectable activity with insoluble substrates such as cotton and filter paper. No activity with pNP-alpha-L-arabinofuranoside (pNPAr) or carboxymethylcellulose (CMC) as substrates. Synthesizes galactooligosaccharides (GalOS) from lactose. Hydrolyzes pretreated corn stover releasing both glucose and xylose. This multifunctional enzyme may provide C.owensensis the benefit of utilizing a wide variety of available carbon sources in its natural growing environment as the ability to convert a wide range of soluble oligosaccharides to monoses is required in order to assimilate them. This is Multifunctional glycoside hydrolase from Caldicellulosiruptor owensensis (strain ATCC 700167 / DSM 13100 / OL).